The following is a 104-amino-acid chain: uncharacterized protein (104 aa).

Residues 1–24 form a disordered region; the sequence is MISTEKSSDAVAMHCPSGDQHNSE.

This is an uncharacterized protein from Saccharomyces cerevisiae (strain ATCC 204508 / S288c) (Baker's yeast).